The primary structure comprises 538 residues: Fructooligosaccharide ABC transporter substrate-binding protein FusA (538 aa).

Residues 1 to 22 (MKFKTFSKSAVLLTASLAVLAA) form the signal peptide. The N-palmitoyl cysteine moiety is linked to residue Cys23. Cys23 is lipidated: S-diacylglycerol cysteine. Glu167 is a binding site for substrate. Residues Asp215, Asn217, Asn219, Glu221, Asp223, and Glu224 each contribute to the Ca(2+) site. Asn235 provides a ligand contact to substrate. Ca(2+) contacts are provided by Asp263, Phe264, Asp267, and Asn268. Residues Trp314, Asn318, Lys353, Trp384, Arg419, and Glu423 each coordinate substrate.

This sequence belongs to the bacterial solute-binding protein 1 family. In terms of assembly, the complex is composed of two ATP-binding proteins (MsmK), two transmembrane proteins (FusB and FusC) and a solute-binding protein (FusA).

It localises to the cell membrane. Functionally, part of the ABC transporter complex FusABC-MsmK involved in short- and long-chain fructooligosaccharide (FOS) import. Required for the utilization of long-chain FOSs. Binds kestose, nystose, fructofuranosyl-nystose and inulin, but not sucrose. Has a preference for long-chain FOSs (tetrasaccharides and larger). This Streptococcus pneumoniae serotype 4 (strain ATCC BAA-334 / TIGR4) protein is Fructooligosaccharide ABC transporter substrate-binding protein FusA.